A 612-amino-acid polypeptide reads, in one-letter code: Glutamine--fructose-6-phosphate aminotransferase [isomerizing] (612 aa).

Residue Cys-2 is the Nucleophile; for GATase activity of the active site. In terms of domain architecture, Glutamine amidotransferase type-2 spans 2–217 (CGIVGGVAER…EGDIARLTRD (216 aa)). 2 consecutive SIS domains span residues 283-428 (AEAD…VKEQ) and 461-602 (LSEL…VDQP). Lys-607 (for Fru-6P isomerization activity) is an active-site residue.

Homodimer.

Its subcellular location is the cytoplasm. The catalysed reaction is D-fructose 6-phosphate + L-glutamine = D-glucosamine 6-phosphate + L-glutamate. Catalyzes the first step in hexosamine metabolism, converting fructose-6P into glucosamine-6P using glutamine as a nitrogen source. This is Glutamine--fructose-6-phosphate aminotransferase [isomerizing] from Acinetobacter baylyi (strain ATCC 33305 / BD413 / ADP1).